A 480-amino-acid chain; its full sequence is ATP synthase subunit beta (480 aa).

Gly-158 to Thr-165 is a binding site for ATP.

It belongs to the ATPase alpha/beta chains family. F-type ATPases have 2 components, CF(1) - the catalytic core - and CF(0) - the membrane proton channel. CF(1) has five subunits: alpha(3), beta(3), gamma(1), delta(1), epsilon(1). CF(0) has three main subunits: a(1), b(2) and c(9-12). The alpha and beta chains form an alternating ring which encloses part of the gamma chain. CF(1) is attached to CF(0) by a central stalk formed by the gamma and epsilon chains, while a peripheral stalk is formed by the delta and b chains.

It localises to the cell inner membrane. The enzyme catalyses ATP + H2O + 4 H(+)(in) = ADP + phosphate + 5 H(+)(out). Produces ATP from ADP in the presence of a proton gradient across the membrane. The catalytic sites are hosted primarily by the beta subunits. The chain is ATP synthase subunit beta from Acidobacterium capsulatum (strain ATCC 51196 / DSM 11244 / BCRC 80197 / JCM 7670 / NBRC 15755 / NCIMB 13165 / 161).